A 374-amino-acid polypeptide reads, in one-letter code: Fe(2+) transport protein 1 (374 aa).

Residues 1-33 (MATPRTLVPILPPVAALLLLLVAASSIPILAAA) form the signal peptide. Topologically, residues 34–62 (QPADACGGAPDQAAADGACHDVPRALRLK) are extracellular. A helical membrane pass occupies residues 63–83 (LIAIPTILVSSVVGVCLPLLS). Residues 84–92 (RSVPALRPD) lie on the Cytoplasmic side of the membrane. Residues 93-113 (GGLFAVVKAFASGVILATGYM) traverse the membrane as a helical segment. The Extracellular segment spans residues 114–137 (HVLPDAFNNLTSPCLPRKPWSEFP). A helical transmembrane segment spans residues 138 to 158 (FAAFVAMLAAVSTLMADSLML). Residues 159–219 (TYYNRSKPRP…ATQVQLRRNR (61 aa)) lie on the Cytoplasmic side of the membrane. The tract at residues 166 to 199 (PRPSSGGDVAAVADHGESPDQGHRHGHGHGHGHG) is disordered. A compositionally biased stretch (basic and acidic residues) spans 179 to 188 (DHGESPDQGH). A helical membrane pass occupies residues 220 to 240 (VVVQVLEIGIVVHSVVIGLGM). Over 241-251 (GASQNVCTIRP) the chain is Extracellular. Residues 252-272 (LVAAMCFHQMFEGMGLGGCIL) form a helical membrane-spanning segment. The Cytoplasmic portion of the chain corresponds to 273-282 (QAEYGRRMRS). Residues 283–303 (VLVFFFSTTTPFGIALGLALT) traverse the membrane as a helical segment. Topologically, residues 304–313 (RVYRDNSPTA) are extracellular. Residues 314 to 334 (LIVVGLLNAASAGLLHYMALV) form a helical membrane-spanning segment. The Cytoplasmic portion of the chain corresponds to 335–353 (ELLAADFMGPKLQGNVRLQ). A helical membrane pass occupies residues 354-374 (LAAFLAVLLGAGGMSVMAKWA).

This sequence belongs to the ZIP transporter (TC 2.A.5) family. As to expression, expressed in companion cells in the upper region of the root.

The protein resides in the cell membrane. Its function is as follows. Iron transporter involved in the uptake of iron from the rhizosphere across the plasma membrane in the root epidermal layer. May also transport other divalent cations. The chain is Fe(2+) transport protein 1 (IRT1) from Oryza sativa subsp. japonica (Rice).